Reading from the N-terminus, the 1178-residue chain is DNA-directed RNA polymerase subunit beta' (1178 aa).

Zn(2+)-binding residues include cysteine 60, cysteine 62, cysteine 75, and cysteine 78. Mg(2+)-binding residues include aspartate 450, aspartate 452, and aspartate 454. Zn(2+)-binding residues include cysteine 795, cysteine 869, cysteine 876, and cysteine 879.

This sequence belongs to the RNA polymerase beta' chain family. As to quaternary structure, the RNAP catalytic core consists of 2 alpha, 1 beta, 1 beta' and 1 omega subunit. When a sigma factor is associated with the core the holoenzyme is formed, which can initiate transcription. The cofactor is Mg(2+). Zn(2+) is required as a cofactor.

The enzyme catalyses RNA(n) + a ribonucleoside 5'-triphosphate = RNA(n+1) + diphosphate. DNA-dependent RNA polymerase catalyzes the transcription of DNA into RNA using the four ribonucleoside triphosphates as substrates. The polypeptide is DNA-directed RNA polymerase subunit beta' (Clostridium beijerinckii (strain ATCC 51743 / NCIMB 8052) (Clostridium acetobutylicum)).